We begin with the raw amino-acid sequence, 434 residues long: Sensor histidine kinase Hik2 (434 aa).

Positions 16–152 constitute a GAF domain; sequence ISLCQSQVRL…EAIAKSLAVA (137 aa). [3Fe-4S] cluster is bound at residue C19. Residues 182 to 432 enclose the Histidine kinase domain; the sequence is DLLHQLRNPL…TFTLWLRSGE (251 aa). H185 carries the post-translational modification Phosphohistidine; by autocatalysis. Residues 357–361 carry the G1 box motif; it reads DTGYG. The G2 box signature appears at 386-390; it reads GTGLG.

The protein belongs to the chloroplast sensor kinase protein family. As to quaternary structure, exists as monomers, tetramers, hexamers and other higher-order oligomers; all are able to autophosphorylate. Upon treatment with 0.5 M NaCl only tetramers are seen, which are probably inactive. Interacts with both RppA and Rre1. [3Fe-4S] cluster serves as cofactor. Autophosphorylates, probably on His-185.

It localises to the cytoplasm. The enzyme catalyses ATP + protein L-histidine = ADP + protein N-phospho-L-histidine.. Autophosphorylation is inhibited by Na(+) but not by Cl(-). Reducing agents dithionite, duroquinol and decyl-plastoquinone, but not NADPH or ferredoxin inhibit autophosphorylation. Oxidation of the Fe-S cluster (with potassium ferricyanide) induces a conformational change that is conducive to its autophosphorylation activity. In terms of biological role, member of possibly 2 two-component regulatory system(s) Hik2/Rre1 and Hik2/RppA. Transduces PQ (plastoquinone) redox signals to photosystem gene expression machinery during the adjustment of photosystem stoichiometry. Reduced PQ suppresses its autophosphorylation activity (i.e. kinase activity is higher under oxidizing conditions). Member of two-component regulatory system Hik2/Rre1, controls expression of sigB (sll0306), sll0528, slr1119, slr0852 and ssr3188 in response to hyperosmotic stress. Activity responds to high salt (with a linear response as concentrations rise to 0.5 M NaCl); detects Cl(-) levels. Autophosphorylates and transfers phosphate to Rre1. May transfer phosphate to RppA in a possible Hik2/RppA two-component system. In Synechocystis sp. (strain ATCC 27184 / PCC 6803 / Kazusa), this protein is Sensor histidine kinase Hik2.